Reading from the N-terminus, the 486-residue chain is Adenosylhomocysteinase (486 aa).

Substrate is bound by residues threonine 63, aspartate 147, and glutamate 209. Residue 210–212 (TTT) coordinates NAD(+). 2 residues coordinate substrate: lysine 239 and aspartate 243. Residues asparagine 244, 273-278 (GYGDVG), glutamate 296, asparagine 331, 352-354 (IGH), and asparagine 400 contribute to the NAD(+) site.

This sequence belongs to the adenosylhomocysteinase family. Requires NAD(+) as cofactor.

The catalysed reaction is S-adenosyl-L-homocysteine + H2O = L-homocysteine + adenosine. It participates in amino-acid biosynthesis; L-homocysteine biosynthesis; L-homocysteine from S-adenosyl-L-homocysteine: step 1/1. Its function is as follows. Adenosylhomocysteine is a competitive inhibitor of S-adenosyl-L-methionine-dependent methyl transferase reactions; therefore adenosylhomocysteinase may play a key role in the control of methylations via regulation of the intracellular concentration of adenosylhomocysteine. The chain is Adenosylhomocysteinase from Trichomonas vaginalis.